The chain runs to 361 residues: T-box-containing protein TBX6L (361 aa).

Residues 36-209 (LWMKFHQIGT…NNPFAKGFRE (174 aa)) constitute a DNA-binding region (T-box). 2 disordered regions span residues 203-259 (FAKG…VKEE) and 280-323 (HAFP…QLPS). Composition is skewed to basic and acidic residues over residues 206–220 (GFRE…EGRA) and 234–259 (KLPE…VKEE). The span at 280 to 290 (HAFPAASPAPA) shows a compositional bias: low complexity.

Its subcellular location is the nucleus. Its function is as follows. May be involved in regulating somitogenesis. This chain is T-box-containing protein TBX6L (TBX6L), found in Gallus gallus (Chicken).